A 202-amino-acid polypeptide reads, in one-letter code: Imidazole glycerol phosphate synthase subunit HisH (202 aa).

One can recognise a Glutamine amidotransferase type-1 domain in the interval 3-202; sequence RIVIIDYGLG…KILKNFVEMC (200 aa). The Nucleophile role is filled by Cys79. Residues His183 and Glu185 contribute to the active site.

As to quaternary structure, heterodimer of HisH and HisF.

It is found in the cytoplasm. The catalysed reaction is 5-[(5-phospho-1-deoxy-D-ribulos-1-ylimino)methylamino]-1-(5-phospho-beta-D-ribosyl)imidazole-4-carboxamide + L-glutamine = D-erythro-1-(imidazol-4-yl)glycerol 3-phosphate + 5-amino-1-(5-phospho-beta-D-ribosyl)imidazole-4-carboxamide + L-glutamate + H(+). The enzyme catalyses L-glutamine + H2O = L-glutamate + NH4(+). Its pathway is amino-acid biosynthesis; L-histidine biosynthesis; L-histidine from 5-phospho-alpha-D-ribose 1-diphosphate: step 5/9. IGPS catalyzes the conversion of PRFAR and glutamine to IGP, AICAR and glutamate. The HisH subunit catalyzes the hydrolysis of glutamine to glutamate and ammonia as part of the synthesis of IGP and AICAR. The resulting ammonia molecule is channeled to the active site of HisF. The chain is Imidazole glycerol phosphate synthase subunit HisH from Methanosarcina acetivorans (strain ATCC 35395 / DSM 2834 / JCM 12185 / C2A).